We begin with the raw amino-acid sequence, 308 residues long: tRNA dimethylallyltransferase (308 aa).

14 to 21 (GPTASGKT) is an ATP binding site. 16 to 21 (TASGKT) is a binding site for substrate. Interaction with substrate tRNA stretches follow at residues 39–42 (DSAL), 163–167 (QRLSR), and 244–249 (RCVGYR).

This sequence belongs to the IPP transferase family. Monomer. Mg(2+) serves as cofactor.

It catalyses the reaction adenosine(37) in tRNA + dimethylallyl diphosphate = N(6)-dimethylallyladenosine(37) in tRNA + diphosphate. Catalyzes the transfer of a dimethylallyl group onto the adenine at position 37 in tRNAs that read codons beginning with uridine, leading to the formation of N6-(dimethylallyl)adenosine (i(6)A). This is tRNA dimethylallyltransferase from Shewanella loihica (strain ATCC BAA-1088 / PV-4).